The chain runs to 769 residues: Cullin-3 (769 aa).

The interval 614–655 (DRELPSTTSSTTTTTTTATSSSTSTSPSSSSSSISTPTPSKS) is disordered. A compositionally biased stretch (low complexity) spans 618-653 (PSTTSSTTTTTTTATSSSTSTSPSSSSSSISTPTPS). Residues 699-761 (DRKHQIEASI…REYLERSKQD (63 aa)) form the Cullin neddylation domain. K713 is covalently cross-linked (Glycyl lysine isopeptide (Lys-Gly) (interchain with G-Cter in NEDD8)).

The protein belongs to the cullin family. Post-translationally, neddylated. Deneddylated via its interaction with the COP9 signalosome (CSN) complex.

The protein resides in the nucleus. The protein operates within protein modification; protein ubiquitination. Its function is as follows. Probable core component of cullin-based SCF-like E3 ubiquitin-protein ligase complexes which mediate the ubiquitination and subsequent proteasomal degradation of target proteins. The E3 ubiquitin-protein ligase activity of the complex is dependent on the neddylation of the cullin subunit. The sequence is that of Cullin-3 (culC) from Dictyostelium discoideum (Social amoeba).